The following is a 309-amino-acid chain: Olfactory receptor 8U1 (309 aa).

Residues 1-25 lie on the Extracellular side of the membrane; the sequence is MAHINCTQATEFILVGLTDHQELKM. Asparagine 5 is a glycosylation site (N-linked (GlcNAc...) asparagine). A helical membrane pass occupies residues 26–46; the sequence is PLFVLFLSIYLFTVVGNLGLI. The Cytoplasmic segment spans residues 47–54; it reads LLIRADTS. A helical transmembrane segment spans residues 55 to 75; the sequence is LNTPMYFFLSNLAFVDFCYSS. At 76 to 99 the chain is on the extracellular side; the sequence is VITPKMLGNFLYKQNVISFDACAT. Residues cysteine 97 and cysteine 189 are joined by a disulfide bond. A helical membrane pass occupies residues 100-120; sequence QLGCFLTFMISESLLLASMAY. Residues 121–139 lie on the Cytoplasmic side of the membrane; that stretch reads DRYVAICNPLLYMVVMTPG. The chain crosses the membrane as a helical span at residues 140–160; it reads ICIQLVAVPYSYSFLMALFHT. The Extracellular segment spans residues 161 to 197; the sequence is ILTFRLSYCHSNIVNHFYCDDMPLLRLTCSDTRFKQL. Residues 198–217 traverse the membrane as a helical segment; it reads WIFACAGIMFISSLLIVFVS. Residues 218–237 lie on the Cytoplasmic side of the membrane; that stretch reads YMFIISAILRMHSAEGRQKA. Residues 238–258 traverse the membrane as a helical segment; it reads FSTCGSHMLAVTIFYGTLIFM. Residues 259-271 are Extracellular-facing; it reads YLQPSSSHALDTD. Residues 272 to 292 traverse the membrane as a helical segment; it reads KMASVFYTVIIPMLNPLIYSL. The Cytoplasmic segment spans residues 293–309; that stretch reads QNKEVKEALKKIIINKN.

Belongs to the G-protein coupled receptor 1 family.

It localises to the cell membrane. Functionally, odorant receptor. The chain is Olfactory receptor 8U1 (OR8U1) from Homo sapiens (Human).